Reading from the N-terminus, the 483-residue chain is Iron-sulfur cluster assembly SufBD family protein ycf24 (483 aa).

The protein belongs to the iron-sulfur cluster assembly SufBD family.

The protein localises to the plastid. The protein resides in the chloroplast. The polypeptide is Iron-sulfur cluster assembly SufBD family protein ycf24 (ycf24) (Guillardia theta (Cryptophyte)).